Here is a 372-residue protein sequence, read N- to C-terminus: MNHCQLPVVIDNGSGMIKAGVAGCREPQFIYPNIIGRAKGQSRAAQGGLELCVGDQAQDWRSSLFISYPVERGLITSWEDMEIMWKHIYDYNLKLKPCDGPVLITEPALNPLANRQQITEMFFEHLGVPAFYMSIQAVLALFAAGFTTGLVLNSGAGVTQSVPIFEGYCLPHGVQQLDLAGLDLTNYLMVLMKNHGIMLLSASDRKIVEDIKESFCYVAMNYEEEMAKKPDCLEKVYQLPDGKVIQLHDQLFSCPEALFSPCHMNLEAPGIDKICFSSIMKCDTGLRNSFFSNIILAGGSTSFPGLDKRLVKDIAKVAPANTAVQVIAPPERKISVWMGGSILASLSAFQDMWITAAEFKEVGPNIVHQRCF.

The protein belongs to the actin family. Interacts with PFN3. In terms of tissue distribution, ubiquitously expressed.

It is found in the cytoplasm. The protein resides in the cytoskeleton. The protein localises to the nucleus. This Homo sapiens (Human) protein is Actin-related protein T3 (ACTRT3).